Consider the following 99-residue polypeptide: Aspartyl/glutamyl-tRNA(Asn/Gln) amidotransferase subunit C (99 aa).

It belongs to the GatC family. As to quaternary structure, heterotrimer of A, B and C subunits.

It catalyses the reaction L-glutamyl-tRNA(Gln) + L-glutamine + ATP + H2O = L-glutaminyl-tRNA(Gln) + L-glutamate + ADP + phosphate + H(+). It carries out the reaction L-aspartyl-tRNA(Asn) + L-glutamine + ATP + H2O = L-asparaginyl-tRNA(Asn) + L-glutamate + ADP + phosphate + 2 H(+). Allows the formation of correctly charged Asn-tRNA(Asn) or Gln-tRNA(Gln) through the transamidation of misacylated Asp-tRNA(Asn) or Glu-tRNA(Gln) in organisms which lack either or both of asparaginyl-tRNA or glutaminyl-tRNA synthetases. The reaction takes place in the presence of glutamine and ATP through an activated phospho-Asp-tRNA(Asn) or phospho-Glu-tRNA(Gln). The sequence is that of Aspartyl/glutamyl-tRNA(Asn/Gln) amidotransferase subunit C from Thermobifida fusca (strain YX).